A 324-amino-acid polypeptide reads, in one-letter code: MKPSIILYKALPDDLLHRLEEHFTVTQVPNLRPETVEQHAQAFASAEGLLGSSETVNSALLEKMPKLRAASTVSVGYDNFDVAALNARSVLLMHTPTVLTETVADTVMALVLSTARRVVEVAERVKVGEWTKSIGPDWFGTDVHHKTLGIVGMGRIGLALAQRAHFGFNMPILYNARRHHPEAEERFNARYCDLDTLLQAADFVCLILPLTEETHHLFGAAQFAKMKSSAIFINAGRGPVVDETALIAALQSGEIHAAGLDVFEQEPLPVDSPLLSLPNVVALPHIGSATHETRYNMAACAVDNLIDALQGKVEKNCVNPQVAG.

Active-site residues include Arg237 and Glu266. The Proton donor role is filled by His285.

Belongs to the D-isomer specific 2-hydroxyacid dehydrogenase family. GhrB subfamily. In terms of assembly, homodimer.

The protein localises to the cytoplasm. The enzyme catalyses glycolate + NADP(+) = glyoxylate + NADPH + H(+). It catalyses the reaction (R)-glycerate + NAD(+) = 3-hydroxypyruvate + NADH + H(+). It carries out the reaction (R)-glycerate + NADP(+) = 3-hydroxypyruvate + NADPH + H(+). Catalyzes the NADPH-dependent reduction of glyoxylate and hydroxypyruvate into glycolate and glycerate, respectively. This Citrobacter koseri (strain ATCC BAA-895 / CDC 4225-83 / SGSC4696) protein is Glyoxylate/hydroxypyruvate reductase B.